Reading from the N-terminus, the 438-residue chain is V-type ATP synthase beta chain (438 aa).

This sequence belongs to the ATPase alpha/beta chains family.

Produces ATP from ADP in the presence of a proton gradient across the membrane. The V-type beta chain is a regulatory subunit. In Chlamydia trachomatis serovar L2b (strain UCH-1/proctitis), this protein is V-type ATP synthase beta chain.